A 187-amino-acid chain; its full sequence is UPF0301 protein SO_3346 (187 aa).

Belongs to the UPF0301 (AlgH) family.

This is UPF0301 protein SO_3346 from Shewanella oneidensis (strain ATCC 700550 / JCM 31522 / CIP 106686 / LMG 19005 / NCIMB 14063 / MR-1).